The sequence spans 255 residues: Ribonuclease PH (255 aa).

Phosphate contacts are provided by residues arginine 86 and 124–126; that span reads GTR.

The protein belongs to the RNase PH family. As to quaternary structure, homohexameric ring arranged as a trimer of dimers.

It carries out the reaction tRNA(n+1) + phosphate = tRNA(n) + a ribonucleoside 5'-diphosphate. Functionally, phosphorolytic 3'-5' exoribonuclease that plays an important role in tRNA 3'-end maturation. Removes nucleotide residues following the 3'-CCA terminus of tRNAs; can also add nucleotides to the ends of RNA molecules by using nucleoside diphosphates as substrates, but this may not be physiologically important. Probably plays a role in initiation of 16S rRNA degradation (leading to ribosome degradation) during starvation. The protein is Ribonuclease PH of Geobacillus thermodenitrificans (strain NG80-2).